Reading from the N-terminus, the 171-residue chain is tRNA-splicing endonuclease (171 aa).

Residues Tyr-110, His-117, and Lys-148 contribute to the active site.

Belongs to the tRNA-intron endonuclease family. Archaeal short subfamily. Homotetramer; although the tetramer contains four active sites, only two participate in the cleavage. Therefore, it should be considered as a dimer of dimers.

It carries out the reaction pretRNA = a 3'-half-tRNA molecule with a 5'-OH end + a 5'-half-tRNA molecule with a 2',3'-cyclic phosphate end + an intron with a 2',3'-cyclic phosphate and a 5'-hydroxyl terminus.. Its function is as follows. Endonuclease that removes tRNA introns. Cleaves pre-tRNA at the 5'- and 3'-splice sites to release the intron. The products are an intron and two tRNA half-molecules bearing 2',3' cyclic phosphate and 5'-OH termini. Recognizes a pseudosymmetric substrate in which 2 bulged loops of 3 bases are separated by a stem of 4 bp. The protein is tRNA-splicing endonuclease of Thermococcus onnurineus (strain NA1).